Here is a 174-residue protein sequence, read N- to C-terminus: Protein VdlD (174 aa).

In terms of domain architecture, HotDog ACOT-type spans 20-132 (DRTKLLMSYL…YFTMVAVENG (113 aa)).

The protein belongs to the acyl coenzyme A hydrolase family.

The sequence is that of Protein VdlD (vdlD) from Helicobacter pylori (strain J99 / ATCC 700824) (Campylobacter pylori J99).